The sequence spans 489 residues: Cytochrome P450 2C70 (489 aa).

The signal sequence occupies residues 1–27 (MALFIFLGIWLSCFLFLFLWNQHRGRG). Cys434 provides a ligand contact to heme.

Belongs to the cytochrome P450 family. The cofactor is heme. As to expression, expressed in liver.

The protein localises to the endoplasmic reticulum membrane. It is found in the microsome membrane. It catalyses the reaction chenodeoxycholate + reduced [NADPH--hemoprotein reductase] + O2 = alpha-muricholate + oxidized [NADPH--hemoprotein reductase] + H2O + H(+). It carries out the reaction ursodeoxycholate + reduced [NADPH--hemoprotein reductase] + O2 = beta-muricholate + oxidized [NADPH--hemoprotein reductase] + H2O + H(+). In terms of biological role, a cytochrome P450 monooxygenase involved in muricholic acid (MCA) synthesis. Hydroxylates at the 6-beta position two major bile acids, chenodeoxycholic acid (CDCA) and ursodeoxycholic acid (UDCA) to form alpha-MCA and beta-MCA, respectively. May regulate NR1H4/farnesoid X receptor signaling, as taurine-conjugated MCAs are antagonists of NR1H4. Mechanistically, uses molecular oxygen inserting one oxygen atom into a substrate, and reducing the second into a water molecule, with two electrons provided by NADPH via cytochrome P450 reductase (CPR; NADPH-ferrihemoprotein reductase). The protein is Cytochrome P450 2C70 of Mus musculus (Mouse).